We begin with the raw amino-acid sequence, 727 residues long: Synaptic vesicle glycoprotein 2C (727 aa).

An interaction with SYT1 region spans residues 1–57; sequence MEDSYKDRTSLMKGAKDIAREVKKQTVKKVNQAVDRAQDEYTQRSYSRFQDEEDDDD. The Cytoplasmic portion of the chain corresponds to 1 to 154; it reads MEDSYKDRTS…CGHGRFQWAL (154 aa). 2 disordered regions span residues 24–84 and 109–128; these read KQTV…GHDE and VGQP…SERR. S75 and S76 each carry phosphoserine. T79 carries the post-translational modification Phosphothreonine. Over residues 113-128 the composition is skewed to basic and acidic residues; it reads KGDEYKDRRELESERR. A helical membrane pass occupies residues 155–175; sequence FFVLGMALMADGVEVFVVGFV. Over 176-191 the chain is Extracellular; it reads LPSAETDLCIPNSGSG. Residues 192-212 traverse the membrane as a helical segment; the sequence is WLGSIVYLGMMVGAFFWGGLA. Over 213–226 the chain is Cytoplasmic; it reads DKVGRKQSLLICMS. A helical transmembrane segment spans residues 227 to 247; it reads VNGFFAFLSSFVQGYGFFLFC. A topological domain (extracellular) is located at residue R248. A helical membrane pass occupies residues 249 to 269; the sequence is LLSGFGIGGAIPTVFSYFAEV. At 270-280 the chain is on the cytoplasmic side; sequence LAREKRGEHLS. Residues 281–301 traverse the membrane as a helical segment; that stretch reads WLCMFWMIGGIYASAMAWAII. Residues 302–320 lie on the Extracellular side of the membrane; that stretch reads PHYGWSFSMGSAYQFHSWR. The helical transmembrane segment at 321–341 threads the bilayer; that stretch reads VFVIVCALPCVSSVVALTFMP. The Cytoplasmic portion of the chain corresponds to 342-437; the sequence is ESPRFLLEVG…PVRDNTIKLT (96 aa). Residues 438 to 458 form a helical membrane-spanning segment; it reads IVWFTLSFGYYGLSVWFPDVI. Residues 459 to 578 are Extracellular-facing; sequence KPLQSDEYAL…CQITFDDDYS (120 aa). Phosphotyrosine is present on Y466. Residues N480, N484, N534, N559, and N565 are each glycosylated (N-linked (GlcNAc...) asparagine). The interval 519–563 is (Microbial infection) C.botulinum neurotoxin type A-binding; sequence SCTFEDVTSVNTYFKNCTFIDTVFDNTDFEPYKFIDSEFKNCSFF. Residues 579–599 form a helical membrane-spanning segment; sequence AYWIYFVNFLGTLAVLPGNIV. Topologically, residues 600–609 are cytoplasmic; the sequence is SALLMDRIGR. A helical transmembrane segment spans residues 610 to 630; that stretch reads LTMLGGSMVLSGISCFFLWFG. Topologically, residues 631 to 636 are extracellular; the sequence is TSESMM. A helical membrane pass occupies residues 637 to 657; it reads IGMLCLYNGLTISAWNSLDVV. Residues 658–669 lie on the Cytoplasmic side of the membrane; that stretch reads TVELYPTDRRAT. Residues 670-690 traverse the membrane as a helical segment; that stretch reads GFGFLNALCKAAAVLGNLIFG. Residues 691-698 are Extracellular-facing; it reads SLVSITKS. A helical transmembrane segment spans residues 699–719; it reads IPILLASTVLVCGGLVGLCLP. Residues 720-727 lie on the Cytoplasmic side of the membrane; that stretch reads DTRTQVLM.

Belongs to the major facilitator superfamily. As to quaternary structure, interacts with SYT1 in a calcium-dependent manner. (Microbial infection) Interacts with C.botulinum neurotoxin type A1 and type A2 (BoNT/A, botA). Interaction is improved by glycosylation of SV2. Post-translationally, N-glycosylated. Upon expression in a kidney cell line the most abundant glycan on Asn-534 is GlcNAc(3)Hex(5), while on Asn-559 and Asn-565 the most abundant glycan is GlcNAc2Fuc1Man3GlcNAc3Gal3. Both Asn-559 and Asn-565 have a high degree of glycan heterogeneity.

It is found in the cytoplasmic vesicle. It localises to the secretory vesicle. Its subcellular location is the synaptic vesicle membrane. Plays a role in the control of regulated secretion in neural and endocrine cells, enhancing selectively low-frequency neurotransmission. Positively regulates vesicle fusion by maintaining the readily releasable pool of secretory vesicles. Functionally, (Microbial infection) Receptor for C.botulinum neurotoxin type A (BoNT/A, botA); the toxin probably binds via extracellular loop 4. Recognition by BoNT/A relies on both protein-protein and protein-N-glycosylation; glycosylation of Asn-559 increases its affinity for BoNT/A. Also serves as a receptor for the closely related C.botulinum neurotoxin type A2; glycosylation is not essential but enhances the interaction. In terms of biological role, (Microbial infection) Possible receptor for C.botulinum neurotoxin type D (BoNT/D, botD); note that type D does not usually infect humans. The chain is Synaptic vesicle glycoprotein 2C (SV2C) from Homo sapiens (Human).